Here is a 620-residue protein sequence, read N- to C-terminus: Glutathione-regulated potassium-efflux system protein KefC (620 aa).

12 consecutive transmembrane segments (helical) span residues 4–24 (HTLIQALIYLGSAALIVPIAV), 26–46 (LGLGSVLGYLIAGCIIGPWGL), 54–74 (SILHFAEIGVVLMLFIIGLEL), 90–110 (GALQMVICGGLLGLFCMLLGL), 114–134 (VAELIGMTLALSSTAIAMQAM), 149–169 (FAVLLFQDIAAIPLVAMIPLL), 178–198 (MGAFVLSALKVAGALALVVLL), 218–238 (VFSAVALFLVFGFGLLLEEVG), 270–290 (GLLLGLFFIGVGMSIDFGTLI), 294–314 (LRIVILLLGFLIIKIAMLWLI), 327–347 (WFAVLLGQGSEFAFVVFGAAQ), and 359–379 (SLTLAVALSMAATPILLVILN). Residues 399–518 (QPRVIIAGFG…AGVEKPERET (120 aa)) enclose the RCK N-terminal domain. The interval 597–620 (GWQGTEEGKHTGNMADEPETKPSS) is disordered.

Belongs to the monovalent cation:proton antiporter 2 (CPA2) transporter (TC 2.A.37) family. KefC subfamily. As to quaternary structure, homodimer. Interacts with the regulatory subunit KefF.

The protein resides in the cell inner membrane. Functionally, pore-forming subunit of a potassium efflux system that confers protection against electrophiles. Catalyzes K(+)/H(+) antiport. This is Glutathione-regulated potassium-efflux system protein KefC from Escherichia coli O45:K1 (strain S88 / ExPEC).